The sequence spans 624 residues: Actin-related protein 8 (624 aa).

At Met-1 the chain carries N-acetylmethionine. The span at 1-25 shows a compositional bias: basic and acidic residues; sequence MTQAEKGDAENGKEKGGEKEKEQRG. The interval 1 to 29 is disordered; sequence MTQAEKGDAENGKEKGGEKEKEQRGVKRP. 2 residues coordinate ATP: Ser-55 and Thr-56. The residue at position 132 (Ser-132) is a Phosphoserine. 283 to 286 serves as a coordination point for ATP; sequence DVGD. Ser-412 is subject to Phosphoserine. The tract at residues 430–462 is disordered; that stretch reads SKQEQSAKATADRKSASKPIGFEGDLRGQSSDL.

The protein belongs to the actin family. ARP8 subfamily. In terms of assembly, component of the chromatin remodeling INO80 complex; specifically part of a complex module associated with the DBINO domain of INO80. Exists as monomers and dimers, but the dimer is most probably the biologically relevant form required for stable interactions with histones that exploits the twofold symmetry of the nucleosome core.

It is found in the nucleus. The protein localises to the chromosome. Functionally, plays an important role in the functional organization of mitotic chromosomes. Exhibits low basal ATPase activity, and unable to polymerize. Its function is as follows. Proposed core component of the chromatin remodeling INO80 complex which is involved in transcriptional regulation, DNA replication and probably DNA repair. Required for the recruitment of INO80 (and probably the INO80 complex) to sites of DNA damage Strongly prefer nucleosomes and H3-H4 tetramers over H2A-H2B dimers, suggesting it may act as a nucleosome recognition module within the complex. The sequence is that of Actin-related protein 8 (Actr8) from Mus musculus (Mouse).